Here is a 629-residue protein sequence, read N- to C-terminus: 1-deoxy-D-xylulose-5-phosphate synthase (629 aa).

Thiamine diphosphate is bound by residues His72 and 113 to 115 (GHA). Asp144 is a binding site for Mg(2+). Thiamine diphosphate contacts are provided by residues 145 to 146 (GA), Asn174, Tyr287, and Glu370. Position 174 (Asn174) interacts with Mg(2+).

The protein belongs to the transketolase family. DXPS subfamily. As to quaternary structure, homodimer. Mg(2+) serves as cofactor. The cofactor is thiamine diphosphate.

The catalysed reaction is D-glyceraldehyde 3-phosphate + pyruvate + H(+) = 1-deoxy-D-xylulose 5-phosphate + CO2. It participates in metabolic intermediate biosynthesis; 1-deoxy-D-xylulose 5-phosphate biosynthesis; 1-deoxy-D-xylulose 5-phosphate from D-glyceraldehyde 3-phosphate and pyruvate: step 1/1. Functionally, catalyzes the acyloin condensation reaction between C atoms 2 and 3 of pyruvate and glyceraldehyde 3-phosphate to yield 1-deoxy-D-xylulose-5-phosphate (DXP). The chain is 1-deoxy-D-xylulose-5-phosphate synthase from Prochlorococcus marinus (strain AS9601).